We begin with the raw amino-acid sequence, 189 residues long: Potassium-transporting ATPase KdpC subunit (189 aa).

Residues 10–30 form a helical membrane-spanning segment; it reads LTLVFCVFFSVCYILVLWIFA.

It belongs to the KdpC family. In terms of assembly, the system is composed of three essential subunits: KdpA, KdpB and KdpC.

Its subcellular location is the cell inner membrane. In terms of biological role, part of the high-affinity ATP-driven potassium transport (or Kdp) system, which catalyzes the hydrolysis of ATP coupled with the electrogenic transport of potassium into the cytoplasm. This subunit acts as a catalytic chaperone that increases the ATP-binding affinity of the ATP-hydrolyzing subunit KdpB by the formation of a transient KdpB/KdpC/ATP ternary complex. The sequence is that of Potassium-transporting ATPase KdpC subunit from Phocaeicola vulgatus (strain ATCC 8482 / DSM 1447 / JCM 5826 / CCUG 4940 / NBRC 14291 / NCTC 11154) (Bacteroides vulgatus).